The sequence spans 219 residues: MYLFLMINYFVLANSFDFQGYSMNARNEKSKQKRSSSETDYVCISNDYCAFLQKNTQNLYTLPICKCPGDNECPLTWDPDDGRTLIQGDIHFKFCSSAPVGLKQCGSDDIAYTAMWNKNLKTNTSEFTGEVFCECPKEVTHFLMKTKNEEGIEGQAYKCPKLQTCTSEEICVHIYNYTNNFFEIKYCKCPDGQSCPDELNSAAETDVKKERIRYGMKCK.

An N-terminal signal peptide occupies residues M1–S15.

It belongs to the scoloptoxin-11 family. Post-translationally, contains 8 disulfide bonds. As to expression, expressed by the venom gland.

The protein resides in the secreted. The protein is U-scoloptoxin(11)-Sm7a of Scolopendra morsitans (Tanzanian blue ringleg centipede).